A 373-amino-acid polypeptide reads, in one-letter code: 4-hydroxy-3-methylbut-2-en-1-yl diphosphate synthase (flavodoxin) (373 aa).

Cysteine 270, cysteine 273, cysteine 305, and glutamate 312 together coordinate [4Fe-4S] cluster.

The protein belongs to the IspG family. [4Fe-4S] cluster is required as a cofactor.

The enzyme catalyses (2E)-4-hydroxy-3-methylbut-2-enyl diphosphate + oxidized [flavodoxin] + H2O + 2 H(+) = 2-C-methyl-D-erythritol 2,4-cyclic diphosphate + reduced [flavodoxin]. Its pathway is isoprenoid biosynthesis; isopentenyl diphosphate biosynthesis via DXP pathway; isopentenyl diphosphate from 1-deoxy-D-xylulose 5-phosphate: step 5/6. Functionally, converts 2C-methyl-D-erythritol 2,4-cyclodiphosphate (ME-2,4cPP) into 1-hydroxy-2-methyl-2-(E)-butenyl 4-diphosphate. This Sodalis glossinidius (strain morsitans) protein is 4-hydroxy-3-methylbut-2-en-1-yl diphosphate synthase (flavodoxin).